A 326-amino-acid polypeptide reads, in one-letter code: Neuferricin homolog (326 aa).

Positions 1–34 are cleaved as a signal peptide; that stretch reads MDKNRRRTDDAGLMTKTLAGIAALVFFLSFICSS. Residues 98 to 197 form the Cytochrome b5 heme-binding domain; that stretch reads KHVFTPEQLH…KEYPLVGVVA (100 aa).

It belongs to the cytochrome b5 family. MAPR subfamily.

Its subcellular location is the secreted. In terms of biological role, heme-binding protein. The polypeptide is Neuferricin homolog (tag-131) (Caenorhabditis elegans).